The chain runs to 368 residues: tRNA-specific 2-thiouridylase MnmA (368 aa).

ATP contacts are provided by residues 24–31 (AMSGGVDS) and leucine 50. Residue cysteine 117 is the Nucleophile of the active site. Cysteine 117 and cysteine 213 form a disulfide bridge. Position 141 (glycine 141) interacts with ATP. Residues 163–165 (KDQ) are interaction with tRNA. Cysteine 213 acts as the Cysteine persulfide intermediate in catalysis.

It belongs to the MnmA/TRMU family.

It is found in the cytoplasm. The enzyme catalyses S-sulfanyl-L-cysteinyl-[protein] + uridine(34) in tRNA + AH2 + ATP = 2-thiouridine(34) in tRNA + L-cysteinyl-[protein] + A + AMP + diphosphate + H(+). Catalyzes the 2-thiolation of uridine at the wobble position (U34) of tRNA, leading to the formation of s(2)U34. The protein is tRNA-specific 2-thiouridylase MnmA of Wolbachia pipientis subsp. Culex pipiens (strain wPip).